Consider the following 247-residue polypeptide: E3 SUMO-protein ligase NSE2 (247 aa).

Met1 carries the N-acetylmethionine modification. Residues Lys90 and Lys107 each participate in a glycyl lysine isopeptide (Lys-Gly) (interchain with G-Cter in SUMO2) cross-link. Phosphoserine is present on Ser116. Residues Lys125 and Lys130 each participate in a glycyl lysine isopeptide (Lys-Gly) (interchain with G-Cter in SUMO2) cross-link. The SP-RING-type zinc finger occupies 154–240 (MDEDMIVTQS…LRRAIESHNK (87 aa)). Residues Cys185, His187, Cys210, and Cys215 each contribute to the Zn(2+) site.

The protein belongs to the NSE2 family. As to quaternary structure, component of the SMC5-SMC6 complex which consists at least of SMC5, SMC6, NSMCE2, NSMCE1, NSMCE4A or EID3 and NSMCE3. Post-translationally, sumoylated, possibly via autosumoylation.

Its subcellular location is the nucleus. The protein localises to the chromosome. It is found in the telomere. It localises to the PML body. It participates in protein modification; protein sumoylation. E3 SUMO-protein ligase component of the SMC5-SMC6 complex, a complex involved in DNA double-strand break repair by homologous recombination. Is not be required for the stability of the complex. The complex may promote sister chromatid homologous recombination by recruiting the SMC1-SMC3 cohesin complex to double-strand breaks. Acts as an E3 ligase mediating SUMO attachment to various proteins such as SMC6L1 and TSNAX, the shelterin complex subunits TERF1, TERF2, TINF2 and TERF2IP, RAD51AP1, and maybe the cohesin components RAD21 and STAG2. Required for recruitment of telomeres to PML nuclear bodies. Required for sister chromatid cohesion during prometaphase and mitotic progression. The sequence is that of E3 SUMO-protein ligase NSE2 (Nsmce2) from Rattus norvegicus (Rat).